The following is an 838-amino-acid chain: Glycogen phosphorylase, brain form (838 aa).

Position 2 is an N-acetylalanine (A2). S15 carries the post-translational modification Phosphoserine. D43, Y197, and R310 together coordinate AMP. Position 197 is a phosphotyrosine (Y197). A Phosphotyrosine modification is found at Y473. S524 carries the post-translational modification Phosphoserine. Position 569 (K569) interacts with pyridoxal 5'-phosphate. Positions 677-678 (TG) are pyridoxal 5'-phosphate. The residue at position 681 (K681) is an N6-(pyridoxal phosphate)lysine.

Belongs to the glycogen phosphorylase family. In terms of assembly, homodimer. Dimers associate into a tetramer to form the enzymatically active phosphorylase A. It depends on pyridoxal 5'-phosphate as a cofactor. Post-translationally, phosphorylation of Ser-15 converts phosphorylase B (unphosphorylated) to phosphorylase A.

It catalyses the reaction [(1-&gt;4)-alpha-D-glucosyl](n) + phosphate = [(1-&gt;4)-alpha-D-glucosyl](n-1) + alpha-D-glucose 1-phosphate. Activity of phosphorylase is controlled both by allosteric means (through the non-covalent binding of metabolites) and by covalent modification. Thus AMP allosterically activates, whereas ATP, ADP, and glucose-6-phosphate allosterically inhibit, phosphorylase B. In terms of biological role, glycogen phosphorylase that regulates glycogen mobilization. Phosphorylase is an important allosteric enzyme in carbohydrate metabolism. Enzymes from different sources differ in their regulatory mechanisms and in their natural substrates. However, all known phosphorylases share catalytic and structural properties. The protein is Glycogen phosphorylase, brain form (Pygb) of Rattus norvegicus (Rat).